The sequence spans 134 residues: uncharacterized protein (134 aa).

The next 3 helical transmembrane spans lie at 9–29 (PYFL…HGTA), 49–69 (MLLV…LGLF), and 107–127 (ALLY…ACAL).

It belongs to the DoxX family.

It is found in the cell membrane. This is an uncharacterized protein from Haemophilus influenzae (strain ATCC 51907 / DSM 11121 / KW20 / Rd).